The chain runs to 299 residues: Protoheme IX farnesyltransferase (299 aa).

9 helical membrane-spanning segments follow: residues 27–47 (VVAL…HEHF), 53–73 (LIAL…NHLI), 97–117 (FNVL…LMLW), 121–141 (LTAY…TLYL), 149–169 (IVIA…SITG), 175–195 (AWVL…ALAI), 222–242 (ILLY…VGMA), 244–264 (YLYL…AIKL), and 273–293 (AIEM…ALLL).

The protein belongs to the UbiA prenyltransferase family. Protoheme IX farnesyltransferase subfamily.

It is found in the cell inner membrane. It carries out the reaction heme b + (2E,6E)-farnesyl diphosphate + H2O = Fe(II)-heme o + diphosphate. It participates in porphyrin-containing compound metabolism; heme O biosynthesis; heme O from protoheme: step 1/1. Functionally, converts heme B (protoheme IX) to heme O by substitution of the vinyl group on carbon 2 of heme B porphyrin ring with a hydroxyethyl farnesyl side group. In Vibrio vulnificus (strain CMCP6), this protein is Protoheme IX farnesyltransferase.